Reading from the N-terminus, the 93-residue chain is Protein 6 (93 aa).

Positions 1–16 (MSSQQETNDKSNTQGH) are enriched in polar residues. The disordered stretch occupies residues 1 to 52 (MSSQQETNDKSNTQGHPETDPEGKTGTDTGNTEDSPPDTDNVPITDDAIMDD).

It localises to the virion. This chain is Protein 6 (6), found in Rice yellow stunt virus (RYSV).